A 362-amino-acid polypeptide reads, in one-letter code: Probable dual-specificity RNA methyltransferase RlmN (362 aa).

E105 acts as the Proton acceptor in catalysis. A Radical SAM core domain is found at 111-344 (HEYGNSICVT…VTIRREQGHD (234 aa)). C118 and C349 are oxidised to a cystine. The [4Fe-4S] cluster site is built by C125, C129, and C132. S-adenosyl-L-methionine contacts are provided by residues 175–176 (GE), S207, 230–232 (SLH), and N306. C349 serves as the catalytic S-methylcysteine intermediate.

It belongs to the radical SAM superfamily. RlmN family. [4Fe-4S] cluster is required as a cofactor.

The protein localises to the cytoplasm. It catalyses the reaction adenosine(2503) in 23S rRNA + 2 reduced [2Fe-2S]-[ferredoxin] + 2 S-adenosyl-L-methionine = 2-methyladenosine(2503) in 23S rRNA + 5'-deoxyadenosine + L-methionine + 2 oxidized [2Fe-2S]-[ferredoxin] + S-adenosyl-L-homocysteine. The catalysed reaction is adenosine(37) in tRNA + 2 reduced [2Fe-2S]-[ferredoxin] + 2 S-adenosyl-L-methionine = 2-methyladenosine(37) in tRNA + 5'-deoxyadenosine + L-methionine + 2 oxidized [2Fe-2S]-[ferredoxin] + S-adenosyl-L-homocysteine. Its function is as follows. Specifically methylates position 2 of adenine 2503 in 23S rRNA and position 2 of adenine 37 in tRNAs. The sequence is that of Probable dual-specificity RNA methyltransferase RlmN from Bacillus cereus (strain ATCC 14579 / DSM 31 / CCUG 7414 / JCM 2152 / NBRC 15305 / NCIMB 9373 / NCTC 2599 / NRRL B-3711).